The following is a 491-amino-acid chain: MPAPVVMVIGTASSVGKSTLVAALCRLAARRGLRVAPFKAQNMSNNAAVTADGGEIARSTAVQAAAAGIAPTVAMNPILIKPEGQRRSQIIVEGRPWQTLAAGDFWRRKTLLWEVVTRNLDALRATYDLVIAEGAGSPVELNLKAGDIVNMRVAVYAQARTLLVGDIDRGGIFAQLLGTLMLLDPTERQLIQGLIVNRFRGDPALFVDGVRILEERSGIPVLGVVPWIEDLGLAEEDAVAIEQSTPVMAQGITIAVIRLPTIANFDDFDPLAREPGVTVRYIDRPGELAGVAAVIIPGVKHTIAARRWLRERGFDEALRRFPGAIVGICGGYQLLGERISDPLAVEGNGGDEVGLGLLPVETIFVTTKQTTQTVAHARVPWGGQAPLHGYEIHMGRTHRIGAASALLTIIQRGAQAVLEEDGCISPDGRVWGCYLHGLFTNDEFRHGWLRQLGWQPTTSVSGSVDPINRLADHVARALGETVLDRLFRLTE.

Residues 251 to 444 (GITIAVIRLP…LHGLFTNDEF (194 aa)) form the GATase cobBQ-type domain. Cys329 acts as the Nucleophile in catalysis. His436 is a catalytic residue.

It belongs to the CobB/CobQ family. CobQ subfamily.

The protein operates within cofactor biosynthesis; adenosylcobalamin biosynthesis. Functionally, catalyzes amidations at positions B, D, E, and G on adenosylcobyrinic A,C-diamide. NH(2) groups are provided by glutamine, and one molecule of ATP is hydrogenolyzed for each amidation. This is Cobyric acid synthase from Chloroflexus aggregans (strain MD-66 / DSM 9485).